Reading from the N-terminus, the 239-residue chain is DNA repair protein RecO (239 aa).

Belongs to the RecO family.

Functionally, involved in DNA repair and RecF pathway recombination. The polypeptide is DNA repair protein RecO (Stenotrophomonas maltophilia (strain K279a)).